We begin with the raw amino-acid sequence, 313 residues long: 4-diphosphocytidyl-2-C-methyl-D-erythritol kinase (313 aa).

Lysine 29 is a catalytic residue. ATP is bound at residue 113 to 123 (PMGGGVGGGSS). Aspartate 155 is an active-site residue.

The protein belongs to the GHMP kinase family. IspE subfamily.

It carries out the reaction 4-CDP-2-C-methyl-D-erythritol + ATP = 4-CDP-2-C-methyl-D-erythritol 2-phosphate + ADP + H(+). It functions in the pathway isoprenoid biosynthesis; isopentenyl diphosphate biosynthesis via DXP pathway; isopentenyl diphosphate from 1-deoxy-D-xylulose 5-phosphate: step 3/6. Its function is as follows. Catalyzes the phosphorylation of the position 2 hydroxy group of 4-diphosphocytidyl-2C-methyl-D-erythritol. The polypeptide is 4-diphosphocytidyl-2-C-methyl-D-erythritol kinase (Haemophilus influenzae (strain ATCC 51907 / DSM 11121 / KW20 / Rd)).